A 308-amino-acid chain; its full sequence is Probable manganese-dependent inorganic pyrophosphatase (308 aa).

Mn(2+) is bound by residues His-9, Asp-13, Asp-15, Asp-74, His-96, and Asp-148.

It belongs to the PPase class C family. The cofactor is Mn(2+).

Its subcellular location is the cytoplasm. It carries out the reaction diphosphate + H2O = 2 phosphate + H(+). The chain is Probable manganese-dependent inorganic pyrophosphatase from Oceanobacillus iheyensis (strain DSM 14371 / CIP 107618 / JCM 11309 / KCTC 3954 / HTE831).